Reading from the N-terminus, the 117-residue chain is Large ribosomal subunit protein uL18 (117 aa).

The protein belongs to the universal ribosomal protein uL18 family. Part of the 50S ribosomal subunit; part of the 5S rRNA/L5/L18/L25 subcomplex. Contacts the 5S and 23S rRNAs.

Functionally, this is one of the proteins that bind and probably mediate the attachment of the 5S RNA into the large ribosomal subunit, where it forms part of the central protuberance. This Serratia proteamaculans (strain 568) protein is Large ribosomal subunit protein uL18.